The chain runs to 1847 residues: Cilia- and flagella-associated protein 65 (1847 aa).

Residues phenylalanine 112–isoleucine 132 form a helical membrane-spanning segment. The region spanning aspartate 805–methionine 914 is the MSP domain. Positions glutamine 1457–threonine 1483 form a coiled coil. The tract at residues tyrosine 1668–lysine 1721 is disordered. Residues glutamine 1688 to aspartate 1720 are compositionally biased toward acidic residues.

It belongs to the CFAP65 family. In terms of assembly, interacts with CFAP47. As to expression, predominantly expressed in testis. Highly expressed in round and elongating spermatids. Expressed also in certain ciliated organs, such as the brain, lung and kidney.

The protein localises to the cell projection. It localises to the cilium. Its subcellular location is the flagellum membrane. The protein resides in the cytoplasmic vesicle. It is found in the secretory vesicle. The protein localises to the acrosome membrane. It localises to the cytoplasm. Functionally, plays a role in flagellar formation and sperm motility. This Mus musculus (Mouse) protein is Cilia- and flagella-associated protein 65.